Here is a 92-residue protein sequence, read N- to C-terminus: Small ribosomal subunit protein uS19 (92 aa).

It belongs to the universal ribosomal protein uS19 family.

Protein S19 forms a complex with S13 that binds strongly to the 16S ribosomal RNA. The sequence is that of Small ribosomal subunit protein uS19 from Staphylococcus aureus (strain Mu3 / ATCC 700698).